Consider the following 276-residue polypeptide: MALKTFNPTSPGRRQLVLVDRSALHKGKPVKALTQGLSSKGGRNNQGRITVRHQGGGVKRLYRQVDFKRTRWDIPATVERLEYDPNRTAFIALIKYQDGELSYIIAPQRLEVGDTVITSATADIKPGNTLPLKSIPVGTIIHNIELKPQKGAQMVRSAGTYAQLVGRDSGYAQIKLASGELRMVLDSCLATIGAVSNPDKMNEVSSKAGRNRHLGKRPTVRGVVMNPVDHPHGGGEGKSSGGRHPVSPWGKKTRGPKTRNNKVTDRLIIRRRNAKR.

Positions 223 to 276 (VVMNPVDHPHGGGEGKSSGGRHPVSPWGKKTRGPKTRNNKVTDRLIIRRRNAKR) are disordered. Basic residues predominate over residues 251 to 260 (KKTRGPKTRN).

Belongs to the universal ribosomal protein uL2 family. In terms of assembly, part of the 50S ribosomal subunit. Forms a bridge to the 30S subunit in the 70S ribosome.

Its function is as follows. One of the primary rRNA binding proteins. Required for association of the 30S and 50S subunits to form the 70S ribosome, for tRNA binding and peptide bond formation. It has been suggested to have peptidyltransferase activity; this is somewhat controversial. Makes several contacts with the 16S rRNA in the 70S ribosome. This Hyphomonas neptunium (strain ATCC 15444) protein is Large ribosomal subunit protein uL2.